We begin with the raw amino-acid sequence, 462 residues long: Sodium-coupled neutral amino acid transporter 7 (462 aa).

Ser28 carries the phosphoserine modification. A run of 11 helical transmembrane segments spans residues 56-76 (AIFIVVNACLGAGLLNFPAAF), 82-102 (VAAGIALQMGMLVFIISGLVI), 130-150 (LCEVAIAVYTFGTCIAFLIII), 178-198 (FTISLTAFLFILPLSIPREIG), 205-225 (FLSVVGTWYVTAIVIIKYIWP), 239-259 (ASWMAVFNAMPTICFGFQCHV), 282-302 (AAMVIALAVYMGTGICGFLTF), 319-339 (MAVAVARAFIILSVLTSYPIL), 371-391 (VLQTLVWFLLTLLLALFIPDI), 395-415 (ISVIGGLAACFIFVFPGLCLI), and 428-448 (ASWWVLVSYGVLLVTLGAFIF).

The protein belongs to the amino acid/polyamine transporter 2 family. Interacts with the mTORC1 complex; this interaction mediates the recruitment of mTORC1 to the lysosome and its subsequent activation.

Its subcellular location is the lysosome membrane. The protein localises to the cell projection. The protein resides in the axon. The enzyme catalyses L-asparagine(in) + Na(+)(in) = L-asparagine(out) + Na(+)(out). It carries out the reaction L-glutamine(in) + Na(+)(in) = L-glutamine(out) + Na(+)(out). In terms of biological role, symporter that selectively cotransports sodium ions and amino acids, such as L-glutamine and L-asparagine from the lysosome into the cytoplasm and may participates in mTORC1 activation. The transport activity requires an acidic lysosomal lumen. The sequence is that of Sodium-coupled neutral amino acid transporter 7 from Homo sapiens (Human).